The primary structure comprises 501 residues: ATP synthase subunit alpha, chloroplastic (501 aa).

Residue 170-177 (GDRQTGKT) participates in ATP binding.

The protein belongs to the ATPase alpha/beta chains family. F-type ATPases have 2 components, CF(1) - the catalytic core - and CF(0) - the membrane proton channel. CF(1) has five subunits: alpha(3), beta(3), gamma(1), delta(1), epsilon(1). CF(0) has four main subunits: a, b, b' and c.

It is found in the plastid. The protein localises to the chloroplast thylakoid membrane. It carries out the reaction ATP + H2O + 4 H(+)(in) = ADP + phosphate + 5 H(+)(out). In terms of biological role, produces ATP from ADP in the presence of a proton gradient across the membrane. The alpha chain is a regulatory subunit. In Pisum sativum (Garden pea), this protein is ATP synthase subunit alpha, chloroplastic.